We begin with the raw amino-acid sequence, 301 residues long: tRNA pseudouridine synthase B (301 aa).

The active-site Nucleophile is the Asp38.

This sequence belongs to the pseudouridine synthase TruB family. Type 1 subfamily.

It carries out the reaction uridine(55) in tRNA = pseudouridine(55) in tRNA. Responsible for synthesis of pseudouridine from uracil-55 in the psi GC loop of transfer RNAs. The polypeptide is tRNA pseudouridine synthase B (Lacticaseibacillus paracasei (strain ATCC 334 / BCRC 17002 / CCUG 31169 / CIP 107868 / KCTC 3260 / NRRL B-441) (Lactobacillus paracasei)).